We begin with the raw amino-acid sequence, 615 residues long: Elongation factor 4 (615 aa).

Residues 14 to 196 (AMIRNFCIIA…EIVRQVPAPV (183 aa)) enclose the tr-type G domain. Residues 26 to 31 (DHGKST) and 143 to 146 (NKID) each bind GTP.

Belongs to the TRAFAC class translation factor GTPase superfamily. Classic translation factor GTPase family. LepA subfamily.

The protein localises to the cell membrane. It carries out the reaction GTP + H2O = GDP + phosphate + H(+). Functionally, required for accurate and efficient protein synthesis under certain stress conditions. May act as a fidelity factor of the translation reaction, by catalyzing a one-codon backward translocation of tRNAs on improperly translocated ribosomes. Back-translocation proceeds from a post-translocation (POST) complex to a pre-translocation (PRE) complex, thus giving elongation factor G a second chance to translocate the tRNAs correctly. Binds to ribosomes in a GTP-dependent manner. The protein is Elongation factor 4 of Frankia alni (strain DSM 45986 / CECT 9034 / ACN14a).